A 162-amino-acid chain; its full sequence is Functional amyloid chaperone FapA (162 aa).

An N-terminal signal peptide occupies residues 1–28 (MSGSSLRIVVPALLVIVGSVPVSLPAHA).

This sequence belongs to the FapA family. As to quaternary structure, monomer in solution. Interacts with FapC but not FapB in vitro.

Its subcellular location is the periplasm. An intrinsically disordered chaperone for fibril amyloid FapC that guards against fibrillation within the periplasm. Upon overexpression of the endogenous six-gene locus (fapA-fapF), cells form large clumps during liquid growth, make large amounts of biofilm and produce amyloid fibrils. The sequence is that of Functional amyloid chaperone FapA from Pseudomonas aeruginosa (strain ATCC 15692 / DSM 22644 / CIP 104116 / JCM 14847 / LMG 12228 / 1C / PRS 101 / PAO1).